Consider the following 492-residue polypeptide: N-succinylglutamate 5-semialdehyde dehydrogenase (492 aa).

NAD(+) is bound at residue 220 to 225 (GSANTG). Residues E243 and C277 contribute to the active site.

This sequence belongs to the aldehyde dehydrogenase family. AstD subfamily.

The enzyme catalyses N-succinyl-L-glutamate 5-semialdehyde + NAD(+) + H2O = N-succinyl-L-glutamate + NADH + 2 H(+). The protein operates within amino-acid degradation; L-arginine degradation via AST pathway; L-glutamate and succinate from L-arginine: step 4/5. Catalyzes the NAD-dependent reduction of succinylglutamate semialdehyde into succinylglutamate. This Escherichia coli (strain UTI89 / UPEC) protein is N-succinylglutamate 5-semialdehyde dehydrogenase.